The following is a 214-amino-acid chain: Thiamine-phosphate synthase (214 aa).

4-amino-2-methyl-5-(diphosphooxymethyl)pyrimidine contacts are provided by residues Q37–K41 and N73. Mg(2+) is bound by residues D74 and D93. S112 is a binding site for 4-amino-2-methyl-5-(diphosphooxymethyl)pyrimidine. Residue T139–S141 coordinates 2-[(2R,5Z)-2-carboxy-4-methylthiazol-5(2H)-ylidene]ethyl phosphate. K142 contacts 4-amino-2-methyl-5-(diphosphooxymethyl)pyrimidine. 2-[(2R,5Z)-2-carboxy-4-methylthiazol-5(2H)-ylidene]ethyl phosphate contacts are provided by residues G171 and I191–S192.

Belongs to the thiamine-phosphate synthase family. The cofactor is Mg(2+).

The enzyme catalyses 2-[(2R,5Z)-2-carboxy-4-methylthiazol-5(2H)-ylidene]ethyl phosphate + 4-amino-2-methyl-5-(diphosphooxymethyl)pyrimidine + 2 H(+) = thiamine phosphate + CO2 + diphosphate. The catalysed reaction is 2-(2-carboxy-4-methylthiazol-5-yl)ethyl phosphate + 4-amino-2-methyl-5-(diphosphooxymethyl)pyrimidine + 2 H(+) = thiamine phosphate + CO2 + diphosphate. It carries out the reaction 4-methyl-5-(2-phosphooxyethyl)-thiazole + 4-amino-2-methyl-5-(diphosphooxymethyl)pyrimidine + H(+) = thiamine phosphate + diphosphate. It participates in cofactor biosynthesis; thiamine diphosphate biosynthesis; thiamine phosphate from 4-amino-2-methyl-5-diphosphomethylpyrimidine and 4-methyl-5-(2-phosphoethyl)-thiazole: step 1/1. Condenses 4-methyl-5-(beta-hydroxyethyl)thiazole monophosphate (THZ-P) and 2-methyl-4-amino-5-hydroxymethyl pyrimidine pyrophosphate (HMP-PP) to form thiamine monophosphate (TMP). The polypeptide is Thiamine-phosphate synthase (Listeria innocua serovar 6a (strain ATCC BAA-680 / CLIP 11262)).